We begin with the raw amino-acid sequence, 699 residues long: D-(-)-3-hydroxybutyrate oligomer hydrolase (699 aa).

The first 33 residues, 1 to 33, serve as a signal peptide directing secretion; the sequence is MTAIRGGSRRAPGLALALLGGVLLGACHGDENA. Catalysis depends on Ser311, which acts as the Charge relay system.

Belongs to the D-(-)-3-hydroxybutyrate oligomer hydrolase family.

The protein resides in the secreted. It catalyses the reaction (3R)-hydroxybutanoate dimer + H2O = 2 (R)-3-hydroxybutanoate + H(+). Its pathway is lipid metabolism; butanoate metabolism. In terms of biological role, participates in the degradation of poly-3-hydroxybutyrate (PHB). It works downstream of poly(3-hydroxybutyrate) depolymerase, hydrolyzing D(-)-3-hydroxybutyrate oligomers of various length (3HB-oligomers) into 3HB-monomers. This Burkholderia mallei (strain ATCC 23344) protein is D-(-)-3-hydroxybutyrate oligomer hydrolase.